The following is a 211-amino-acid chain: Thiamine-phosphate synthase (211 aa).

Residues 37–41 (QLRIK) and N69 contribute to the 4-amino-2-methyl-5-(diphosphooxymethyl)pyrimidine site. Positions 70 and 89 each coordinate Mg(2+). S108 contributes to the 4-amino-2-methyl-5-(diphosphooxymethyl)pyrimidine binding site. A 2-[(2R,5Z)-2-carboxy-4-methylthiazol-5(2H)-ylidene]ethyl phosphate-binding site is contributed by 134-136 (TQT). Residue K137 participates in 4-amino-2-methyl-5-(diphosphooxymethyl)pyrimidine binding. 2-[(2R,5Z)-2-carboxy-4-methylthiazol-5(2H)-ylidene]ethyl phosphate is bound by residues G166 and 186–187 (VS).

The protein belongs to the thiamine-phosphate synthase family. Mg(2+) serves as cofactor.

The catalysed reaction is 2-[(2R,5Z)-2-carboxy-4-methylthiazol-5(2H)-ylidene]ethyl phosphate + 4-amino-2-methyl-5-(diphosphooxymethyl)pyrimidine + 2 H(+) = thiamine phosphate + CO2 + diphosphate. It carries out the reaction 2-(2-carboxy-4-methylthiazol-5-yl)ethyl phosphate + 4-amino-2-methyl-5-(diphosphooxymethyl)pyrimidine + 2 H(+) = thiamine phosphate + CO2 + diphosphate. It catalyses the reaction 4-methyl-5-(2-phosphooxyethyl)-thiazole + 4-amino-2-methyl-5-(diphosphooxymethyl)pyrimidine + H(+) = thiamine phosphate + diphosphate. It functions in the pathway cofactor biosynthesis; thiamine diphosphate biosynthesis; thiamine phosphate from 4-amino-2-methyl-5-diphosphomethylpyrimidine and 4-methyl-5-(2-phosphoethyl)-thiazole: step 1/1. Condenses 4-methyl-5-(beta-hydroxyethyl)thiazole monophosphate (THZ-P) and 2-methyl-4-amino-5-hydroxymethyl pyrimidine pyrophosphate (HMP-PP) to form thiamine monophosphate (TMP). This chain is Thiamine-phosphate synthase, found in Salmonella typhimurium (strain LT2 / SGSC1412 / ATCC 700720).